The following is a 939-amino-acid chain: Valine--tRNA ligase (939 aa).

Residues 47 to 57 (PNVTGILHMGH) carry the 'HIGH' region motif. Residues 563 to 567 (KLSKS) carry the 'KMSKS' region motif. Lysine 566 contributes to the ATP binding site. Residues 873 to 939 (AEHLAKEHAR…QSILDKIASL (67 aa)) adopt a coiled-coil conformation.

The protein belongs to the class-I aminoacyl-tRNA synthetase family. ValS type 1 subfamily. Monomer.

It localises to the cytoplasm. It carries out the reaction tRNA(Val) + L-valine + ATP = L-valyl-tRNA(Val) + AMP + diphosphate. Its function is as follows. Catalyzes the attachment of valine to tRNA(Val). As ValRS can inadvertently accommodate and process structurally similar amino acids such as threonine, to avoid such errors, it has a 'posttransfer' editing activity that hydrolyzes mischarged Thr-tRNA(Val) in a tRNA-dependent manner. The sequence is that of Valine--tRNA ligase from Chlamydia muridarum (strain MoPn / Nigg).